Here is a 1146-residue protein sequence, read N- to C-terminus: MGPAPAGEQLRGATGEPEVMEPALEGTGKEGKKASSRKRTLAEPPAKGLLQPVKLSRAELYKEPTNEELNRLRETEILFHSSLLRLQVEELLKEVRLSEKKKDRIDAFLREVNQRVVRVPSVPETELTDQAWLPAGVRVPLHQVPYAVKGCFRFLPPAQVTVVGSYLLGTCIRPDINVDVALTMPREILQDKDGLNQRYFRKRALYLAHLAHHLAQDPLFGSVCFSYTNGCHLKPSLLLRPRGKDERLVTVRLHPCPPPDFFRPCRLLPTKNNVRSAWYRGQSPAGDGSPEPPTPRYNTWVLQDTVLESHLQLLSTILSSAQGLKDGVALLKVWLRQRELDKGQGGFTGFLVSMLVVFLVSTRKIHTTMSGYQVLRSVLQFLATTDLTVNGISLCLSSDPSLPALADFHQAFSVVFLDSSGHLNLCADVTASTYHQVQHEARLSMMLLDSRADDGFHLLLMTPKPMIRAFDHVLHLRPLSRLQAACHRLKLWPELQDNGGDYVSAALGPLTTLLEQGLGARLNLLAHSRPPVPEWDISQDPPKHKDSGTLTLGLLLRPEGLTSVLELGPEADQPEAAKFRQFWGSRSELRRFQDGAIREAVVWEAASMSQKRLIPHQVVTHLLALHADIPETCVHYVGGPLDALIQGLKETSSTGEEALVAAVRCYDDLSRLLWGLEGLPLTVSAVQGAHPVLRYTEVFPPTPVRPAFSFYETLRERSSLLPRLDKPCPAYVEPMTVVCHLEGSGQWPQDAEAVQRVRAAFQLRLAELLTQQHGLQCRATATHTDVLKDGFVFRIRVAYQREPQILKEVQSPEGMISLRDTAASLRLERDTRQLPLLTSALHGLQQQHPAFSGVARLAKRWVRAQLLGEGFADESLDLVAAALFLHPEPFTPPSSPQVGFLRFLFLVSTFDWKNNPLFVNLNNELTVEEQVEIRSGFLAARAQLPVMVIVTPQDRKNSVWTQDGPSAQILQQLVVLAAEALPMLEKQLMDPRGPGDIRTVFRPPLDIYDVLIRLSPRHIPRHRQAVDSPAASFCRGLLSQPGPSSLMPVLGYDPPQLYLTQLREAFGDLALFFYDQHGGEVIGVLWKPTSFQPQPFKASSTKGRMVMSRGGELVMVPNVEAILEDFAVLGEGLVQTVEARSERWTV.

Positions 1–48 (MGPAPAGEQLRGATGEPEVMEPALEGTGKEGKKASSRKRTLAEPPAKG) are disordered. The residue at position 56 (serine 56) is a Phosphoserine. Positions 83–114 (LLRLQVEELLKEVRLSEKKKDRIDAFLREVNQ) form a coiled coil. Serine 283, serine 289, and serine 811 each carry phosphoserine.

Belongs to the NRAP family. Part of the small subunit (SSU) processome, composed of more than 70 proteins and the RNA chaperone small nucleolar RNA (snoRNA) U3. Interacts with RRP7A; required for NOL6 localization to nucleolus.

The protein resides in the nucleus. It localises to the nucleolus. The protein localises to the chromosome. Its function is as follows. Part of the small subunit (SSU) processome, first precursor of the small eukaryotic ribosomal subunit. During the assembly of the SSU processome in the nucleolus, many ribosome biogenesis factors, an RNA chaperone and ribosomal proteins associate with the nascent pre-rRNA and work in concert to generate RNA folding, modifications, rearrangements and cleavage as well as targeted degradation of pre-ribosomal RNA by the RNA exosome. The protein is Nucleolar protein 6 of Homo sapiens (Human).